The primary structure comprises 182 residues: Caltractin ICL1b (182 aa).

The tract at residues 1–31 (MSRRGQQPPPQQQQAPPQKNQAGKFNPAEFV) is disordered. EF-hand domains lie at 38–73 (EEVLEIKEAFDLFDTDGTQSIDPKELKAAMTSLGFE), 74–109 (AKNQTIYQMISDLDTDGSGQIDFAEFLKLMTARISE), 111–146 (DSKADIQKVFNLFDSERAGVITLKDLRKVAKELGET), and 147–182 (MDDSELQEMIDRADSDGDAQVTFEDFYNIMTKKTFA). Ca(2+) contacts are provided by Asp51, Asp53, Thr55, Ser57, Glu62, Asp87, Asp89, Ser91, Gln93, and Glu98.

This sequence belongs to the centrin family.

The protein resides in the cytoplasm. It localises to the cytoskeleton. Its function is as follows. Plays a fundamental role in microtubule organizing center structure and function. Component of the infraciliary lattice (ICL) and the ciliary basal bodies. This Paramecium tetraurelia protein is Caltractin ICL1b (Icl1b).